Consider the following 496-residue polypeptide: Cytochrome P450 3A56 (496 aa).

Cysteine 441 lines the heme pocket.

Belongs to the cytochrome P450 family. The cofactor is heme. In terms of tissue distribution, highly expressed in liver and intestine. Moderate expression in gill and spleen. Low expression in kidney, brain and heart.

It is found in the endoplasmic reticulum membrane. The protein resides in the microsome membrane. It carries out the reaction an organic molecule + reduced [NADPH--hemoprotein reductase] + O2 = an alcohol + oxidized [NADPH--hemoprotein reductase] + H2O + H(+). Its function is as follows. Putative steroid 6-beta-hydroxylase. The protein is Cytochrome P450 3A56 (cyp3a56) of Fundulus heteroclitus (Killifish).